A 444-amino-acid chain; its full sequence is UDP-N-acetylmuramoylalanine--D-glutamate ligase (444 aa).

Glycine 109 to threonine 115 serves as a coordination point for ATP.

This sequence belongs to the MurCDEF family.

It is found in the cytoplasm. The enzyme catalyses UDP-N-acetyl-alpha-D-muramoyl-L-alanine + D-glutamate + ATP = UDP-N-acetyl-alpha-D-muramoyl-L-alanyl-D-glutamate + ADP + phosphate + H(+). Its pathway is cell wall biogenesis; peptidoglycan biosynthesis. In terms of biological role, cell wall formation. Catalyzes the addition of glutamate to the nucleotide precursor UDP-N-acetylmuramoyl-L-alanine (UMA). In Bacteroides thetaiotaomicron (strain ATCC 29148 / DSM 2079 / JCM 5827 / CCUG 10774 / NCTC 10582 / VPI-5482 / E50), this protein is UDP-N-acetylmuramoylalanine--D-glutamate ligase.